Consider the following 431-residue polypeptide: Adenylosuccinate synthetase (431 aa).

GTP contacts are provided by residues 13–19 (GDEGKGK) and 41–43 (GHT). Asp14 serves as the catalytic Proton acceptor. Positions 14 and 41 each coordinate Mg(2+). IMP is bound by residues 14–17 (DEGK), 39–42 (NAGH), Thr130, Arg144, Gln225, Thr240, and Arg304. The active-site Proton donor is the His42. 300-306 (ATTGRKR) contributes to the substrate binding site. GTP contacts are provided by residues Arg306, 332–334 (KLD), and 415–417 (STG).

This sequence belongs to the adenylosuccinate synthetase family. As to quaternary structure, homodimer. The cofactor is Mg(2+).

The protein resides in the cytoplasm. It carries out the reaction IMP + L-aspartate + GTP = N(6)-(1,2-dicarboxyethyl)-AMP + GDP + phosphate + 2 H(+). It participates in purine metabolism; AMP biosynthesis via de novo pathway; AMP from IMP: step 1/2. Functionally, plays an important role in the de novo pathway of purine nucleotide biosynthesis. Catalyzes the first committed step in the biosynthesis of AMP from IMP. This is Adenylosuccinate synthetase from Shewanella amazonensis (strain ATCC BAA-1098 / SB2B).